The following is a 447-amino-acid chain: uncharacterized protein (447 aa).

Positions 87, 93, 96, and 162 each coordinate [4Fe-4S] cluster. S-adenosyl-L-methionine contacts are provided by glutamine 284, tyrosine 313, glutamate 334, and aspartate 375. The Nucleophile role is filled by cysteine 402.

It belongs to the class I-like SAM-binding methyltransferase superfamily. RNA M5U methyltransferase family.

This is an uncharacterized protein from Nanoarchaeum equitans (strain Kin4-M).